The primary structure comprises 378 residues: Sphingosine 1-phosphate receptor 3 (378 aa).

Residues 1–40 (MATALPPRLQPVRGNETLREHYQYVGKLAGRLKEASEGST) are Extracellular-facing. A glycan (N-linked (GlcNAc...) asparagine) is linked at N15. The helical transmembrane segment at 41-65 (LTTVLFLVICSFIVLENLMVLIAIW) threads the bilayer. Over 66–72 (KNNKFHN) the chain is Cytoplasmic. The chain crosses the membrane as a helical span at residues 73–101 (RMYFFIGNLALCDLLAGIAYKVNILMSGK). Residues 102–115 (KTFSLSPTVWFLRE) are Extracellular-facing. Residues 116–134 (GSMFVALGASTCSLLAIAI) form a helical membrane-spanning segment. Residues 135 to 153 (ERHLTMIKMRPYDANKRHR) are Cytoplasmic-facing. Residues 154-179 (VFLLIGMCWLIAFTLGALPILGWNCL) traverse the membrane as a helical segment. Topologically, residues 180–195 (HNLPDCSTILPLYSKK) are extracellular. The chain crosses the membrane as a helical span at residues 196–216 (YIAFCISIFTAILVTIVILYA). Residues 217 to 243 (RIYFLVKSSSRKVANHNNSERSMALLR) are Cytoplasmic-facing. A helical membrane pass occupies residues 244 to 265 (TVVIVVSVFIACWSPLFILFLI). Over 266-281 (DVACRVQACPILFKAQ) the chain is Extracellular. The chain crosses the membrane as a helical span at residues 282–302 (WFIVLAVLNSAMNPVIYTLAS). Topologically, residues 303 to 378 (KEMRRAFFRL…AALQNGIFCN (76 aa)) are cytoplasmic. Residue S326 is modified to Phosphoserine. Positions 327–357 (PIQPALDPSRSKSSSSNNSSHSPKVKEDLPH) are disordered. Over residues 337-348 (SKSSSSNNSSHS) the composition is skewed to low complexity.

Belongs to the G-protein coupled receptor 1 family. Expressed in all tissues, but most abundantly in heart, placenta, kidney, and liver.

Its subcellular location is the cell membrane. In terms of biological role, receptor for the lysosphingolipid sphingosine 1-phosphate (S1P). S1P is a bioactive lysophospholipid that elicits diverse physiological effect on most types of cells and tissues. When expressed in rat HTC4 hepatoma cells, is capable of mediating S1P-induced cell proliferation and suppression of apoptosis. This Homo sapiens (Human) protein is Sphingosine 1-phosphate receptor 3.